A 513-amino-acid polypeptide reads, in one-letter code: MKQFKLVNAVSASFVLIGLVLANSDSVFDKWTQEDLADYLRDNKKSLEKYATDSIEDLKTEASQVWDKHAQPKPWWQVWSSDSSSVSNSNPGWFGYTGSSDHPVSDWLFDTWSTDSLRNFLKKNGVDVDDAKASKDSLVKTAKENFNKISKSLKSSGYYPSSSYFDSWSTKDLQNWLNDNGIDYDKAVQSKDELVQKVKENIYRTSEKAEQQRLGLLESLDLAHQQILDTSGQIKDTVFDKWSSDQLTNWLESHKVNIDKNMAKKHDYLVRMAKENSANLKDDIYWYLDYMKRESSPFLTKTPEYVGSVWDSSKNFLTNLYSKFRGKTDNVINDTFLVGLDSWPKDKLKMFLDARGIKYSMLSTEHQLRELVKKSRNEKLKILPKDYQKYFDNSNWSLDDIKGWFADKKDDFQDSQTYSTIMQDFDKVSKNTNDAKDQIAKTWSNTFQSWSQEDLLQYLKSFGVPVKQTSTKDDLINLAKQNTQWLFGTVKEPAYKRYLHNVKNWSKSILGFN.

Phosphothreonine is present on T237. At S243 the chain carries Phosphoserine.

The sequence is that of Meiotic sister chromatid recombination protein 1 (MSC1) from Saccharomyces cerevisiae (strain ATCC 204508 / S288c) (Baker's yeast).